Reading from the N-terminus, the 500-residue chain is L-arabinose isomerase (500 aa).

Mn(2+) contacts are provided by glutamate 306, glutamate 333, histidine 350, and histidine 450.

The protein belongs to the arabinose isomerase family. In terms of assembly, homohexamer. It depends on Mn(2+) as a cofactor.

The enzyme catalyses beta-L-arabinopyranose = L-ribulose. Its pathway is carbohydrate degradation; L-arabinose degradation via L-ribulose; D-xylulose 5-phosphate from L-arabinose (bacterial route): step 1/3. Functionally, catalyzes the conversion of L-arabinose to L-ribulose. This is L-arabinose isomerase from Yersinia enterocolitica serotype O:8 / biotype 1B (strain NCTC 13174 / 8081).